The chain runs to 115 residues: Gonadotropin subunit beta-2 (115 aa).

6 cysteine pairs are disulfide-bonded: cysteine 6–cysteine 54, cysteine 20–cysteine 69, cysteine 23–cysteine 107, cysteine 31–cysteine 85, cysteine 35–cysteine 87, and cysteine 90–cysteine 97. The N-linked (GlcNAc...) asparagine glycan is linked to asparagine 10.

Belongs to the glycoprotein hormones subunit beta family. As to quaternary structure, heterodimer of an alpha and a beta chain.

Its subcellular location is the secreted. Involved in gametogenesis and steroidogenesis. The polypeptide is Gonadotropin subunit beta-2 (cgbb) (Thunnus obesus (Bigeye tuna)).